The chain runs to 217 residues: tRNA (guanine-N(7)-)-methyltransferase (217 aa).

The S-adenosyl-L-methionine site is built by E44, E69, D96, and D118. D118 is a catalytic residue. Substrate-binding positions include K122, D154, and 191-194 (TEYE).

The protein belongs to the class I-like SAM-binding methyltransferase superfamily. TrmB family.

It catalyses the reaction guanosine(46) in tRNA + S-adenosyl-L-methionine = N(7)-methylguanosine(46) in tRNA + S-adenosyl-L-homocysteine. It participates in tRNA modification; N(7)-methylguanine-tRNA biosynthesis. Catalyzes the formation of N(7)-methylguanine at position 46 (m7G46) in tRNA. This chain is tRNA (guanine-N(7)-)-methyltransferase, found in Bacillus cytotoxicus (strain DSM 22905 / CIP 110041 / 391-98 / NVH 391-98).